The chain runs to 208 residues: Imidazoleglycerol-phosphate dehydratase (208 aa).

Residues 1 to 20 (MSRRATVKAPRAGAAARRGA) are disordered. Residues 7 to 19 (VKAPRAGAAARRG) show a composition bias toward low complexity.

The protein belongs to the imidazoleglycerol-phosphate dehydratase family.

The protein localises to the cytoplasm. The enzyme catalyses D-erythro-1-(imidazol-4-yl)glycerol 3-phosphate = 3-(imidazol-4-yl)-2-oxopropyl phosphate + H2O. It participates in amino-acid biosynthesis; L-histidine biosynthesis; L-histidine from 5-phospho-alpha-D-ribose 1-diphosphate: step 6/9. This chain is Imidazoleglycerol-phosphate dehydratase, found in Anaeromyxobacter sp. (strain K).